The primary structure comprises 259 residues: Global transcriptional regulator CodY (259 aa).

A GAF domain region spans residues 1–155 (MALLQKTRII…GATVVGMEIL (155 aa)). The H-T-H motif DNA-binding region spans 203-222 (ASKIADRVGITRSVIVNALR). A Phosphoserine modification is found at Ser-215.

This sequence belongs to the CodY family.

The protein localises to the cytoplasm. In terms of biological role, DNA-binding global transcriptional regulator which is involved in the adaptive response to starvation and acts by directly or indirectly controlling the expression of numerous genes in response to nutrient availability. During rapid exponential growth, CodY is highly active and represses genes whose products allow adaptation to nutrient depletion. The sequence is that of Global transcriptional regulator CodY from Bacillus pumilus (strain SAFR-032).